Here is a 118-residue protein sequence, read N- to C-terminus: Large ribosomal subunit protein bL19 (118 aa).

This sequence belongs to the bacterial ribosomal protein bL19 family.

In terms of biological role, this protein is located at the 30S-50S ribosomal subunit interface and may play a role in the structure and function of the aminoacyl-tRNA binding site. This is Large ribosomal subunit protein bL19 from Campylobacter jejuni subsp. jejuni serotype O:6 (strain 81116 / NCTC 11828).